The chain runs to 78 residues: UPF0270 protein YPTB3725 (78 aa).

The protein belongs to the UPF0270 family.

The polypeptide is UPF0270 protein YPTB3725 (Yersinia pseudotuberculosis serotype I (strain IP32953)).